A 39-amino-acid polypeptide reads, in one-letter code: Natriuretic peptide CnNP-a (39 aa).

Positions 1 to 8 are excised as a propeptide; it reads SGSKTAKI. C12 and C28 are oxidised to a cystine.

This sequence belongs to the natriuretic peptide family. As to expression, expressed by the venom gland.

It localises to the secreted. In terms of biological role, snake venom natriuretic peptide that targets both NPR1 and NPR2. Exhibits hypotensive and vasodepressor activities. The polypeptide is Natriuretic peptide CnNP-a (Cryptophis nigrescens (Eastern small-eyed snake)).